We begin with the raw amino-acid sequence, 332 residues long: UDP-N-acetylenolpyruvoylglucosamine reductase (332 aa).

The 170-residue stretch at 15 to 184 (IDVSAACFLE…TYVSFRLSKR (170 aa)) folds into the FAD-binding PCMH-type domain. Arg160 is an active-site residue. Ser232 serves as the catalytic Proton donor. Residue Glu328 is part of the active site.

It belongs to the MurB family. FAD is required as a cofactor.

It localises to the cytoplasm. The catalysed reaction is UDP-N-acetyl-alpha-D-muramate + NADP(+) = UDP-N-acetyl-3-O-(1-carboxyvinyl)-alpha-D-glucosamine + NADPH + H(+). It participates in cell wall biogenesis; peptidoglycan biosynthesis. Its function is as follows. Cell wall formation. In Bacteroides fragilis (strain ATCC 25285 / DSM 2151 / CCUG 4856 / JCM 11019 / LMG 10263 / NCTC 9343 / Onslow / VPI 2553 / EN-2), this protein is UDP-N-acetylenolpyruvoylglucosamine reductase.